Consider the following 226-residue polypeptide: AN1-type zinc finger protein 3 homolog (226 aa).

The A20-type zinc finger occupies 12–44; the sequence is PSLPPRCPCGFWGSSKTMNLCSKCFADFQKKQP. Zn(2+)-binding residues include C18, C20, C32, and C35. Positions 42-149 are disordered; it reads KQPDEDTAPS…DRPDNSSRSK (108 aa). 3 stretches are compositionally biased toward polar residues: residues 49-59, 67-92, and 105-114; these read APSTSSSQSDL, DNGN…NVDS, and AHVSLTTPSK. Residues 134 to 146 are compositionally biased toward basic and acidic residues; sequence RLLDSGDRPDNSS. Residues 150–199 form an AN1-type zinc finger; it reads QKSRRRCFRCQIKLELVQQELGSCRCGYVFCMLHRLPEQHDCTFDHMGRG. Zn(2+) is bound by residues C156, C159, C173, C175, C180, H183, H189, and C191.

In Xenopus laevis (African clawed frog), this protein is AN1-type zinc finger protein 3 homolog (zfand3).